The chain runs to 439 residues: MTAADLGRYKRFVQYFWDPEPTNDTASQSPIWCLGKEYPILEKSATSAITDSPPQEGHYLPAQSLPTNEVTTPPDSTVGSLESSSGSQNCDTANADGGWPSAFLDDFEAKIWLTYRSNFPAIAKSQDPKALSAMSLSVRLRSQLVDQGGFTSDTGWGCMIRSGQSLLANALLTLRMGREWRRGVSSNEERKILSLFADDPRAPYSIHKFVEHGASACGKHPGEWFGPSATARCIQALSNSQAKSELRVYITGDGSDVYEDKFMSIAKPNHSDFTPTLILVGTRLGLDKITPVYWEALKYSLQMPQSVGIAGGRPSSSHYFIGVQESDFFYLDPHQTRPALPYKDNVEDYTTEDIDSCHTRRLRRLHIKEMDPSMLIAFLIRDENDWNEWRRAVKEVQGKGVIHVADTDPASYGLGGERDGAIDEVETFDDDDDDTILDA.

Residues 48-92 are disordered; the sequence is AITDSPPQEGHYLPAQSLPTNEVTTPPDSTVGSLESSSGSQNCDT. The span at 64-75 shows a compositional bias: polar residues; it reads SLPTNEVTTPPD. The span at 76 to 87 shows a compositional bias: low complexity; the sequence is STVGSLESSSGS. The active-site Nucleophile is the C158. Catalysis depends on residues D332 and H334.

This sequence belongs to the peptidase C54 family.

Its subcellular location is the cytoplasm. It is found in the nucleus. The protein resides in the preautophagosomal structure. It catalyses the reaction [protein]-C-terminal L-amino acid-glycyl-phosphatidylethanolamide + H2O = [protein]-C-terminal L-amino acid-glycine + a 1,2-diacyl-sn-glycero-3-phosphoethanolamine. Functionally, cysteine protease that plays a key role in cytoplasm to vacuole transport (Cvt) and autophagy by mediating both proteolytic activation and delipidation of ATG8. Required for selective autophagic degradation of the nucleus (nucleophagy) as well as for mitophagy which contributes to regulate mitochondrial quantity and quality by eliminating the mitochondria to a basal level to fulfill cellular energy requirements and preventing excess ROS production. The protease activity is required for proteolytic activation of ATG8: cleaves the C-terminal amino acid of ATG8 to reveal a C-terminal glycine. ATG8 ubiquitin-like activity requires the exposure of the glycine at the C-terminus for its conjugation to phosphatidylethanolamine (PE) and its insertion to membranes, which is necessary for autophagy. The ATG8-PE conjugate mediates tethering between adjacent membranes and stimulates membrane hemifusion, leading to expansion of the autophagosomal membrane during autophagy. In addition to the protease activity, also catalyzes deconjugation of PE-conjugated forms of ATG8 during macroautophagy: ATG8 delipidation is required to release the protein from membranes, which facilitates multiple events during macroautophagy, and especially for efficient autophagosome biogenesis, the assembly of ATG9-containing tubulovesicular clusters into phagophores/autophagosomes, and for the disassembly of PAS-associated ATG components. ATG8 delipidation by ATG4 also recycles ATG8-PE generated on inappropriate membranes to maintain a reservoir of unlipidated ATG8 that is required for autophagosome formation at the PAS. The protein is Probable cysteine protease atg4 (atg4) of Botryotinia fuckeliana (strain B05.10) (Noble rot fungus).